The primary structure comprises 185 residues: Large ribosomal subunit protein uL5 (185 aa).

Belongs to the universal ribosomal protein uL5 family. As to quaternary structure, part of the 50S ribosomal subunit; part of the 5S rRNA/L5/L18/L25 subcomplex. Contacts the 5S rRNA and the P site tRNA. Forms a bridge to the 30S subunit in the 70S ribosome.

Functionally, this is one of the proteins that bind and probably mediate the attachment of the 5S RNA into the large ribosomal subunit, where it forms part of the central protuberance. In the 70S ribosome it contacts protein S13 of the 30S subunit (bridge B1b), connecting the 2 subunits; this bridge is implicated in subunit movement. Contacts the P site tRNA; the 5S rRNA and some of its associated proteins might help stabilize positioning of ribosome-bound tRNAs. The sequence is that of Large ribosomal subunit protein uL5 from Bacteroides thetaiotaomicron (strain ATCC 29148 / DSM 2079 / JCM 5827 / CCUG 10774 / NCTC 10582 / VPI-5482 / E50).